A 77-amino-acid polypeptide reads, in one-letter code: DNA-directed RNA polymerase subunit Rpo10 (77 aa).

C7, C10, C44, and C45 together coordinate Zn(2+).

Belongs to the archaeal Rpo10/eukaryotic RPB10 RNA polymerase subunit family. As to quaternary structure, part of the RNA polymerase complex. The cofactor is Zn(2+).

Its subcellular location is the cytoplasm. The catalysed reaction is RNA(n) + a ribonucleoside 5'-triphosphate = RNA(n+1) + diphosphate. In terms of biological role, DNA-dependent RNA polymerase (RNAP) catalyzes the transcription of DNA into RNA using the four ribonucleoside triphosphates as substrates. The protein is DNA-directed RNA polymerase subunit Rpo10 of Aeropyrum pernix (strain ATCC 700893 / DSM 11879 / JCM 9820 / NBRC 100138 / K1).